Here is a 591-residue protein sequence, read N- to C-terminus: F420 non-reducing hydrogenase II large subunit (591 aa).

Residue Glu-42 coordinates Mg(2+). Ni(2+) contacts are provided by Cys-61, Cys-64, Cys-569, and Cys-572. Residue Cys-64 participates in Fe cation binding. Cys-572 lines the Fe cation pocket. His-575 contacts Mg(2+).

The protein belongs to the [NiFe]/[NiFeSe] hydrogenase large subunit family. Composed of a large subunit (VhtA), a small subunit (VhtG) and a cytochrome subunit (VhtC). It depends on Ni(2+) as a cofactor. Requires Fe cation as cofactor.

It localises to the cell membrane. The enzyme catalyses methanophenazine + H2 = dihydromethanophenazine. Functionally, part of the F420 non-reducing hydrogenase II complex that catalyzes the reduction of methanophenazine to dihydromethanophenazine. This chain is F420 non-reducing hydrogenase II large subunit, found in Methanosarcina mazei (strain ATCC BAA-159 / DSM 3647 / Goe1 / Go1 / JCM 11833 / OCM 88) (Methanosarcina frisia).